A 967-amino-acid polypeptide reads, in one-letter code: Leucine-rich repeat-containing G-protein coupled receptor 6 (967 aa).

The signal sequence occupies residues 1-24 (MPSPPGLRALWLCAALCASRRAGG). The Extracellular portion of the chain corresponds to 25-567 (APQPGPGPTA…LFESWGIRLA (543 aa)). Positions 26-66 (PQPGPGPTACPAPCHCQEDGIMLSADCSELGLSAVPGDLDP) constitute an LRRNT domain. Asparagine 77 carries N-linked (GlcNAc...) asparagine glycosylation. LRR repeat units follow at residues 91 to 112 (FLEE…AFSG), 115 to 136 (SLKI…ALWE), 139 to 160 (SLQS…SFEG), 163 to 186 (SLRH…NNLP), 187 to 208 (ALQA…AFQN), 211 to 232 (SLVV…SFEG), 235 to 256 (NLET…IRTL), 258 to 279 (RLQE…AFMG), 282 to 303 (LLQT…AFQY), 306 to 328 (KLHT…KGTT), 329 to 350 (SLEI…MCQQ), 353 to 374 (RLRV…HRCQ), 375 to 396 (KLEE…TFSQ), 399 to 420 (SLQA…AFST), and 423 to 443 (SLVK…AGLG). Residue asparagine 208 is glycosylated (N-linked (GlcNAc...) asparagine). The helical transmembrane segment at 568–588 (VWAIVLLSVLCNGLVLLTVFA) threads the bilayer. At 589-598 (GGPVPLPPVK) the chain is on the cytoplasmic side. A helical transmembrane segment spans residues 599 to 619 (FVVGAIAGANTLTGISCGLLA). Over 620-644 (SVDALTFGQFSEYGARWETGLGCRA) the chain is Extracellular. The cysteines at positions 642 and 717 are disulfide-linked. The chain crosses the membrane as a helical span at residues 645–665 (TGFLAVLGSEASVLLLTLAAV). Residues 666 to 687 (QCSVSVSCVRAYGKSPSLGSVR) are Cytoplasmic-facing. A helical membrane pass occupies residues 688–708 (AGVLGCLALAGLAAALPLASV). The Extracellular segment spans residues 709 to 727 (GEYGASPLCLPYAPPEGQP). The helical transmembrane segment at 728–748 (AALGFTVALVMMNSFCFLVVA) threads the bilayer. Topologically, residues 749 to 774 (GAYIKLYCDLPRGDFEAVWDCAMVRH) are cytoplasmic. The helical transmembrane segment at 775–795 (VAWLIFADGLLYCPVAFLSFA) threads the bilayer. The Extracellular segment spans residues 796-809 (SMLGLFPVTPEAVK). Residues 810-830 (SVLLVVLPLPACLNPLLYLLF) form a helical membrane-spanning segment. Residues 831-967 (NPHFRDDLRR…PSGLAFASHV (137 aa)) lie on the Cytoplasmic side of the membrane.

This sequence belongs to the G-protein coupled receptor 1 family.

It is found in the cell membrane. Its function is as follows. Receptor for R-spondins that potentiates the canonical Wnt signaling pathway and acts as a marker of multipotent stem cells in the epidermis. Upon binding to R-spondins (RSPO1, RSPO2, RSPO3 or RSPO4), associates with phosphorylated LRP6 and frizzled receptors that are activated by extracellular Wnt receptors, triggering the canonical Wnt signaling pathway to increase expression of target genes. In contrast to classical G-protein coupled receptors, does not activate heterotrimeric G-proteins to transduce the signal. May act as a tumor suppressor. The polypeptide is Leucine-rich repeat-containing G-protein coupled receptor 6 (LGR6) (Homo sapiens (Human)).